The chain runs to 448 residues: Putative flavin-containing monooxygenase FMO GS-OX-like 10 (448 aa).

An FAD-binding site is contributed by 18-23; the sequence is GAGAAG. 212 to 217 contributes to the NADP(+) binding site; the sequence is GSSVSG.

The protein belongs to the FMO family. FAD serves as cofactor.

Its function is as follows. Catalyzes the conversion of methylthioalkyl glucosinolates of any chain length into methylsulfinylalkyl glucosinolates. The polypeptide is Putative flavin-containing monooxygenase FMO GS-OX-like 10 (Arabidopsis thaliana (Mouse-ear cress)).